Reading from the N-terminus, the 463-residue chain is Phosphomethylpyrimidine synthase (463 aa).

Substrate contacts are provided by residues N80, M109, Y138, H173, S193 to G195, D234 to R237, and E273. H277 contributes to the Zn(2+) binding site. Residue Y300 coordinates substrate. H341 is a binding site for Zn(2+). C421, C424, and C429 together coordinate [4Fe-4S] cluster.

The protein belongs to the ThiC family. In terms of assembly, homodimer. The cofactor is [4Fe-4S] cluster.

The catalysed reaction is 5-amino-1-(5-phospho-beta-D-ribosyl)imidazole + S-adenosyl-L-methionine = 4-amino-2-methyl-5-(phosphooxymethyl)pyrimidine + CO + 5'-deoxyadenosine + formate + L-methionine + 3 H(+). Its pathway is cofactor biosynthesis; thiamine diphosphate biosynthesis. Catalyzes the synthesis of the hydroxymethylpyrimidine phosphate (HMP-P) moiety of thiamine from aminoimidazole ribotide (AIR) in a radical S-adenosyl-L-methionine (SAM)-dependent reaction. The chain is Phosphomethylpyrimidine synthase from Anaeromyxobacter dehalogenans (strain 2CP-1 / ATCC BAA-258).